A 409-amino-acid polypeptide reads, in one-letter code: uncharacterized protein (409 aa).

One can recognise an HTH arsR-type domain in the interval 305–409 (LTKIDEKVVK…LIGEDDELEM (105 aa)).

This is an uncharacterized protein from Methanocaldococcus jannaschii (strain ATCC 43067 / DSM 2661 / JAL-1 / JCM 10045 / NBRC 100440) (Methanococcus jannaschii).